Reading from the N-terminus, the 362-residue chain is Probable peptidyl-prolyl cis-trans isomerase C27F1.06c (362 aa).

Residue serine 69 is modified to Phosphoserine. A disordered region spans residues 144–274 (DEFSSDEEEM…KVKGDGPAAK (131 aa)). Acidic residues-rich tracts occupy residues 146-167 (FSSD…EEEE) and 175-189 (LNSD…EEEI). Serine 177 carries the post-translational modification Phosphoserine. Positions 190–218 (LEKPVPKDEVAEKHSKDKLKKEEKEKKTA) are enriched in basic and acidic residues. In terms of domain architecture, PPIase FKBP-type spans 276 to 362 (KKRVSMRYIG…VFDVKLLAVN (87 aa)).

It belongs to the FKBP-type PPIase family. FKBP3/4 subfamily.

It carries out the reaction [protein]-peptidylproline (omega=180) = [protein]-peptidylproline (omega=0). PPIases accelerate the folding of proteins. It catalyzes the cis-trans isomerization of proline imidic peptide bonds in oligopeptides. The polypeptide is Probable peptidyl-prolyl cis-trans isomerase C27F1.06c (Schizosaccharomyces pombe (strain 972 / ATCC 24843) (Fission yeast)).